The primary structure comprises 1729 residues: 1,3-beta-glucan synthase component bgs1 (1729 aa).

The residue at position 23 (serine 23) is a Phosphoserine. Helical transmembrane passes span 378 to 398 (WTAC…AVVF), 416 to 436 (SMLL…FIFA), 448 to 468 (LVVG…YSIT), 503 to 523 (FVSW…SYFF), 546 to 566 (YILG…LLYL), and 577 to 597 (YLWY…CLGI). Residues serine 784 and serine 788 each carry the phosphoserine modification. Helical transmembrane passes span 1180–1200 (MVIM…GAMY), 1237–1257 (ILSI…CELG), 1337–1357 (MLLF…WITL), 1440–1460 (YGEI…FLFI), 1484–1504 (VAPL…GIML), 1515–1535 (YGVY…VVVF), 1550–1572 (LLGF…ICFL), and 1678–1698 (ATLY…PFVF).

Belongs to the glycosyltransferase 48 family. In terms of assembly, component of the 1,3-beta-glucan synthase (GS) complex, composed of at least the alternate catalytic subunits bgs1, bgs2, bgs3, and bgs4, and a regulatory subunit chr4.

The protein localises to the cell membrane. The protein resides in the cell septum. It catalyses the reaction [(1-&gt;3)-beta-D-glucosyl](n) + UDP-alpha-D-glucose = [(1-&gt;3)-beta-D-glucosyl](n+1) + UDP + H(+). In terms of biological role, alternate catalytic subunit of the 1,3-beta-glucan synthase (GS) complex. Synthesizes 1,3-beta-glucan, a major structural component of the fungal cell wall. Required for the assembly of the division septum and maintenance of cell polarity. The sequence is that of 1,3-beta-glucan synthase component bgs1 (bgs1) from Schizosaccharomyces pombe (strain 972 / ATCC 24843) (Fission yeast).